A 478-amino-acid chain; its full sequence is Glycogen synthase (478 aa).

ADP-alpha-D-glucose is bound at residue Lys-15.

Belongs to the glycosyltransferase 1 family. Bacterial/plant glycogen synthase subfamily.

The enzyme catalyses [(1-&gt;4)-alpha-D-glucosyl](n) + ADP-alpha-D-glucose = [(1-&gt;4)-alpha-D-glucosyl](n+1) + ADP + H(+). It participates in glycan biosynthesis; glycogen biosynthesis. Synthesizes alpha-1,4-glucan chains using ADP-glucose. In Acholeplasma laidlawii (strain PG-8A), this protein is Glycogen synthase.